The following is a 310-amino-acid chain: Thioredoxin reductase (310 aa).

34–41 (NGIQPGGQ) serves as a coordination point for FAD. Cys135 and Cys138 are disulfide-bonded. 281 to 290 (DVQDKIYRQA) is a binding site for FAD.

It belongs to the class-II pyridine nucleotide-disulfide oxidoreductase family. Homodimer. FAD is required as a cofactor.

The protein resides in the cytoplasm. The enzyme catalyses [thioredoxin]-dithiol + NADP(+) = [thioredoxin]-disulfide + NADPH + H(+). The chain is Thioredoxin reductase (trxB) from Rickettsia bellii (strain RML369-C).